Here is a 478-residue protein sequence, read N- to C-terminus: ATP synthase subunit beta (478 aa).

ATP is bound at residue 160–167; that stretch reads GGAGVGKT.

Belongs to the ATPase alpha/beta chains family. As to quaternary structure, F-type ATPases have 2 components, CF(1) - the catalytic core - and CF(0) - the membrane proton channel. CF(1) has five subunits: alpha(3), beta(3), gamma(1), delta(1), epsilon(1). CF(0) has three main subunits: a(1), b(2) and c(9-12). The alpha and beta chains form an alternating ring which encloses part of the gamma chain. CF(1) is attached to CF(0) by a central stalk formed by the gamma and epsilon chains, while a peripheral stalk is formed by the delta and b chains.

The protein localises to the cell inner membrane. It catalyses the reaction ATP + H2O + 4 H(+)(in) = ADP + phosphate + 5 H(+)(out). Its function is as follows. Produces ATP from ADP in the presence of a proton gradient across the membrane. The catalytic sites are hosted primarily by the beta subunits. The chain is ATP synthase subunit beta from Orientia tsutsugamushi (strain Boryong) (Rickettsia tsutsugamushi).